The primary structure comprises 379 residues: Armadillo repeat-containing X-linked protein 3 (379 aa).

Residues Met-1 to Lys-6 are Mitochondrial intermembrane-facing. Mitochondrion outer membrane (MOM)-targeting sequence stretches follow at residues Met-1 to Lys-6 and Arg-26 to Lys-37. A helical; Signal-anchor membrane pass occupies residues Val-7–Arg-29. The Cytoplasmic portion of the chain corresponds to Gly-30–Glu-379. Phosphoserine is present on residues Ser-61, Ser-67, and Ser-72. The nuclear localization signal stretch occupies residues Arg-89–Ala-98. Residues Arg-95–Gln-106 are compositionally biased toward basic residues. Residues Arg-95–Thr-116 are disordered. Phosphoserine is present on Ser-110. ARM repeat units follow at residues Pro-111–Ala-151, Ala-153–Val-192, and Val-233–Glu-272.

Belongs to the eutherian X-chromosome-specific Armcx family. As to quaternary structure, interacts (via ARM domain) with MIRO1, MIRO2 and TRAK2. The interaction with Miro is calcium-dependent. Interacts with Sox10. Highly expressed in the developing neural tissues, neural crest derivatives and hind limbs. Also widely expressed in the adult nervous tissue, especially in the forebrain, including the cerebral cortex, hippocampus and thalamus.

It localises to the mitochondrion outer membrane. Its subcellular location is the cytoplasm. The protein localises to the nucleus. Its function is as follows. Regulates mitochondrial aggregation and transport in axons in living neurons. May link mitochondria to the Trak2-kinesin motor complex via its interaction with Miro and Trak2. Mitochondrial distribution and dynamics is regulated through Armcx3 protein degradation, which is promoted by PCK and negatively regulated by Wnt1. Enhances the Sox10-mediated transactivation of the neuronal acetylcholine receptor subunit alpha-3 and beta-4 subunit gene promoters. This is Armadillo repeat-containing X-linked protein 3 (Armcx3) from Mus musculus (Mouse).